Consider the following 325-residue polypeptide: MSLKGDRLKDEGSRLQVTAAGATAGLVARFVIAPLDVVKIRLQLQTHSLSDPLSHRDLHGGPIYKGTLPTLRHILRSEGITGLWKGNVPAELLYVCYSAIQFTTYRTTTLLLHQTLGEGTLPPSAESFVAGAIGGGTATAATYPLDPAAHALRRPGQRSRVCESVARRGPDWVVRRAPVGFFGVWDRAWAQIIPYMSFFFATYETLRPHLSELELPFSSSSAVARTMASVMAKSRTFPLDLVRKRIQVQSPTRGRYVHKNIPEYYGGTVGALRTILQREGLRGLYRGLTVSLLKAAPASAVTMWTYERALKFYSGVGEKGEEQRL.

3 Solcar repeats span residues 12-111 (GSRL…TTLL), 122-209 (PPSA…LRPH), and 216-312 (PFSS…ALKF). The next 6 membrane-spanning stretches (helical) occupy residues 17–35 (VTAAGATAGLVARFVIAPL), 92–108 (LLYVCYSAIQFTTYRTT), 127–143 (SFVAGAIGGGTATAATY), 184–200 (VWDRAWAQIIPYMSFFF), 223–239 (VARTMASVMAKSRTFPL), and 287–304 (GLTVSLLKAAPASAVTMW).

Belongs to the mitochondrial carrier (TC 2.A.29) family.

Its subcellular location is the mitochondrion inner membrane. Functionally, mitochondrial transporter that mediates uptake of thiamine pyrophosphate (ThPP) into mitochondria. This Chaetomium globosum (strain ATCC 6205 / CBS 148.51 / DSM 1962 / NBRC 6347 / NRRL 1970) (Soil fungus) protein is Mitochondrial thiamine pyrophosphate carrier 1 (TPC1).